A 318-amino-acid chain; its full sequence is Beta-sarcoglycan (318 aa).

Residues Met1–Val32 form a disordered region. Topologically, residues Met1–Ala65 are cytoplasmic. Over residues Ser21–Val32 the composition is skewed to basic and acidic residues. The chain crosses the membrane as a helical; Signal-anchor for type II membrane protein span at residues Ile66–Ile86. The Extracellular segment spans residues Trp87–His318. Asn158, Asn211, and Asn258 each carry an N-linked (GlcNAc...) asparagine glycan. 2 cysteine pairs are disulfide-bonded: Cys288–Cys314 and Cys290–Cys307.

This sequence belongs to the sarcoglycan beta/delta/gamma/zeta family. As to quaternary structure, cross-link to form 2 major subcomplexes: one consisting of SGCB, SGCD and SGCG and the other consisting of SGCB and SGCD. The association between SGCB and SGCG is particularly strong while SGCA is loosely associated with the other sarcoglycans. In terms of processing, disulfide bonds are present. As to expression, highest expression in heart and skeletal muscle. Low expression in brain, kidney, placenta, pancreas and lung. High expression in fetal brain. Also found in fetal lung, kidney and liver.

The protein resides in the cell membrane. The protein localises to the sarcolemma. It localises to the cytoplasm. It is found in the cytoskeleton. Component of the sarcoglycan complex, a subcomplex of the dystrophin-glycoprotein complex which forms a link between the F-actin cytoskeleton and the extracellular matrix. This is Beta-sarcoglycan (SGCB) from Homo sapiens (Human).